Here is a 427-residue protein sequence, read N- to C-terminus: Enolase (427 aa).

Gln-162 is a (2R)-2-phosphoglycerate binding site. Catalysis depends on Glu-206, which acts as the Proton donor. Positions 243, 286, and 313 each coordinate Mg(2+). 4 residues coordinate (2R)-2-phosphoglycerate: Lys-338, Arg-367, Ser-368, and Lys-389. Residue Lys-338 is the Proton acceptor of the active site.

It belongs to the enolase family. It depends on Mg(2+) as a cofactor.

The protein resides in the cytoplasm. It is found in the secreted. Its subcellular location is the cell surface. It catalyses the reaction (2R)-2-phosphoglycerate = phosphoenolpyruvate + H2O. Its pathway is carbohydrate degradation; glycolysis; pyruvate from D-glyceraldehyde 3-phosphate: step 4/5. In terms of biological role, catalyzes the reversible conversion of 2-phosphoglycerate (2-PG) into phosphoenolpyruvate (PEP). It is essential for the degradation of carbohydrates via glycolysis. In Methanopyrus kandleri (strain AV19 / DSM 6324 / JCM 9639 / NBRC 100938), this protein is Enolase.